A 901-amino-acid polypeptide reads, in one-letter code: Disease resistance RPP8-like protein 3 (901 aa).

Residues 15 to 56 (ALLNRESERLNGIDEQVDGLKRQLRGLQSLLKDADAKKHGSD) adopt a coiled-coil conformation. One can recognise an NB-ARC domain in the interval 144–453 (LQDIQREIRQ…AEGIYDGLTI (310 aa)). ATP is bound by residues 190–197 (GMGGIGKT) and 385–392 (GAQIVGKS). LRR repeat units lie at residues 567 to 591 (LPLL…SIGG), 592 to 615 (LIHL…IRNL), and 833 to 858 (MPCL…KYVT).

Belongs to the disease resistance NB-LRR family. RPP8/HRT subfamily.

Disease resistance protein. This chain is Disease resistance RPP8-like protein 3 (RPP8L3), found in Arabidopsis thaliana (Mouse-ear cress).